Consider the following 242-residue polypeptide: Probable transcriptional regulatory protein XCC3027 (242 aa).

It belongs to the TACO1 family.

The protein resides in the cytoplasm. The sequence is that of Probable transcriptional regulatory protein XCC3027 from Xanthomonas campestris pv. campestris (strain ATCC 33913 / DSM 3586 / NCPPB 528 / LMG 568 / P 25).